The chain runs to 306 residues: 4-diphosphocytidyl-2-C-methyl-D-erythritol kinase (306 aa).

The active site involves Lys-23. Residue 108 to 118 (PIAAGIGGGSA) coordinates ATP. Asp-150 is an active-site residue.

Belongs to the GHMP kinase family. IspE subfamily.

The catalysed reaction is 4-CDP-2-C-methyl-D-erythritol + ATP = 4-CDP-2-C-methyl-D-erythritol 2-phosphate + ADP + H(+). The protein operates within isoprenoid biosynthesis; isopentenyl diphosphate biosynthesis via DXP pathway; isopentenyl diphosphate from 1-deoxy-D-xylulose 5-phosphate: step 3/6. Its function is as follows. Catalyzes the phosphorylation of the position 2 hydroxy group of 4-diphosphocytidyl-2C-methyl-D-erythritol. The chain is 4-diphosphocytidyl-2-C-methyl-D-erythritol kinase from Rhodopseudomonas palustris (strain BisB18).